The chain runs to 299 residues: Cytosolic sulfotransferase 1 (299 aa).

51–56 lines the 3'-phosphoadenylyl sulfate pocket; sequence KAGTTW. The Proton acceptor role is filled by His113. 3'-phosphoadenylyl sulfate is bound by residues Arg135, Ser143, Tyr199, 233–238, and 261–263; these read VQFDAM and RKG.

It belongs to the sulfotransferase 1 family. As to expression, expressed in liver.

The protein resides in the cytoplasm. Its activity is regulated as follows. Inhibited by Co(2+), Zn(2+), Cd(2+) and Pb(2+) ions. Inactivated by Hg(2+) and Cu(2+) ions. Its function is as follows. Sulfotransferase that utilizes 3'-phospho-5'-adenylyl sulfate (PAPS) as sulfonate donor to catalyze the sulfate conjugation of a variety of xenobiotic and endogenous compounds, including 2-naphthol, hydroxychlorobiphenyls, dopamine and T3 (triiodo-L-thyronine). The sequence is that of Cytosolic sulfotransferase 1 from Danio rerio (Zebrafish).